The chain runs to 63 residues: Large ribosomal subunit protein bL35 (63 aa).

The segment at 26–50 (GSGMRHNLEHKSARKRRALKRDDVL) is disordered.

Belongs to the bacterial ribosomal protein bL35 family.

The protein is Large ribosomal subunit protein bL35 of Bifidobacterium animalis subsp. lactis (strain AD011).